We begin with the raw amino-acid sequence, 905 residues long: Coatomer subunit beta' (905 aa).

WD repeat units follow at residues 13–52 (ARSD…LVKT), 55–94 (VCDL…RVHM), 97–136 (AHSD…SCSQ), 140–180 (GHTH…PNFT), 183–224 (GHEK…CVQT), 227–266 (GHAQ…LEST), 350–388 (SCEI…NKSF), and 390–425 (SAQE…KSFK). Lysine 627 carries the post-translational modification N6-acetyllysine. A WD 9 repeat occupies 746 to 783 (IRTGRLPEAAFLARTYLPSQVSRVVKLWRENLSKVNQK). The disordered stretch occupies residues 837–873 (EEAKGFQPSRPTAQQEPDGKPASSPVIMASQTTHKEE). Phosphoserine is present on serine 859. Residues 867 to 891 (QTTHKEEKSLLELEVDLDNLELEDI) adopt a coiled-coil conformation.

This sequence belongs to the WD repeat COPB2 family. In terms of assembly, oligomeric complex that consists of at least the alpha, beta, beta', gamma, delta, epsilon and zeta subunits. Probably interacts with PEX11A. Interacts with SCYL1. Interacts with JAGN1.

It localises to the cytoplasm. It is found in the cytosol. Its subcellular location is the golgi apparatus membrane. The protein resides in the cytoplasmic vesicle. The protein localises to the COPI-coated vesicle membrane. The coatomer is a cytosolic protein complex that binds to dilysine motifs and reversibly associates with Golgi non-clathrin-coated vesicles, which further mediate biosynthetic protein transport from the ER, via the Golgi up to the trans Golgi network. Coatomer complex is required for budding from Golgi membranes, and is essential for the retrograde Golgi-to-ER transport of dilysine-tagged proteins. In mammals, the coatomer can only be recruited by membranes associated to ADP-ribosylation factors (ARFs), which are small GTP-binding proteins; the complex also influences the Golgi structural integrity, as well as the processing, activity, and endocytic recycling of LDL receptors. Functionally, this coatomer complex protein, essential for Golgi budding and vesicular trafficking, is a selective binding protein (RACK) for protein kinase C, epsilon type. It binds to Golgi membranes in a GTP-dependent manner. In Mus musculus (Mouse), this protein is Coatomer subunit beta' (Copb2).